The chain runs to 61 residues: MAKVIVRKNESLDDALRRFKRGVSKDGTLQEYRKREYYVKPSVARKLKSEAAQKRNKKKGR.

The protein belongs to the bacterial ribosomal protein bS21 family.

The chain is Small ribosomal subunit protein bS21 from Leuconostoc mesenteroides subsp. mesenteroides (strain ATCC 8293 / DSM 20343 / BCRC 11652 / CCM 1803 / JCM 6124 / NCDO 523 / NBRC 100496 / NCIMB 8023 / NCTC 12954 / NRRL B-1118 / 37Y).